We begin with the raw amino-acid sequence, 191 residues long: MPKSNDRINLTNQFLIAMPNMADPTFSGTVVYLCDHSERGALGLVINRPTDIDLQALFNRIDLKLEIEPLLHVPVYFGGPVQTERGFVLHDASENTYTSSMQVPGGLEMTTSKDVLEAVASGKGPERFLLTLGHAGWGAGQLEDEISKNGWLTVEADPKIVFDVPAENRFEAALALLGISSSMLSGDAGHA.

This sequence belongs to the UPF0301 (AlgH) family.

This is UPF0301 protein Bphy_2327 from Paraburkholderia phymatum (strain DSM 17167 / CIP 108236 / LMG 21445 / STM815) (Burkholderia phymatum).